A 236-amino-acid chain; its full sequence is 2-C-methyl-D-erythritol 4-phosphate cytidylyltransferase (236 aa).

Belongs to the IspD/TarI cytidylyltransferase family. IspD subfamily.

It carries out the reaction 2-C-methyl-D-erythritol 4-phosphate + CTP + H(+) = 4-CDP-2-C-methyl-D-erythritol + diphosphate. It participates in isoprenoid biosynthesis; isopentenyl diphosphate biosynthesis via DXP pathway; isopentenyl diphosphate from 1-deoxy-D-xylulose 5-phosphate: step 2/6. Its function is as follows. Catalyzes the formation of 4-diphosphocytidyl-2-C-methyl-D-erythritol from CTP and 2-C-methyl-D-erythritol 4-phosphate (MEP). The chain is 2-C-methyl-D-erythritol 4-phosphate cytidylyltransferase from Pseudomonas syringae pv. syringae (strain B728a).